Reading from the N-terminus, the 241-residue chain is tRNA pseudouridine synthase A (241 aa).

D52 (nucleophile) is an active-site residue. Substrate is bound at residue Y111.

The protein belongs to the tRNA pseudouridine synthase TruA family. In terms of assembly, homodimer.

The catalysed reaction is uridine(38/39/40) in tRNA = pseudouridine(38/39/40) in tRNA. Formation of pseudouridine at positions 38, 39 and 40 in the anticodon stem and loop of transfer RNAs. This chain is tRNA pseudouridine synthase A, found in Ureaplasma urealyticum serovar 10 (strain ATCC 33699 / Western).